The following is a 54-amino-acid chain: uncharacterized protein (54 aa).

Basic and acidic residues-rich tracts occupy residues 1–19 (MTEK…HNDL) and 26–54 (EELK…YDTK). The tract at residues 1–54 (MTEKKQQNKPNENPEHNDLTDPIPNEELKENMNDEKHKRQQRDNSQSERDYDTK) is disordered.

This is an uncharacterized protein from Bacillus subtilis (strain 168).